A 411-amino-acid chain; its full sequence is Phosphopentomutase (411 aa).

D14, D306, H311, D347, H348, and H359 together coordinate Mn(2+).

The protein belongs to the phosphopentomutase family. Mn(2+) serves as cofactor.

It is found in the cytoplasm. The catalysed reaction is 2-deoxy-alpha-D-ribose 1-phosphate = 2-deoxy-D-ribose 5-phosphate. It catalyses the reaction alpha-D-ribose 1-phosphate = D-ribose 5-phosphate. Its pathway is carbohydrate degradation; 2-deoxy-D-ribose 1-phosphate degradation; D-glyceraldehyde 3-phosphate and acetaldehyde from 2-deoxy-alpha-D-ribose 1-phosphate: step 1/2. Its function is as follows. Isomerase that catalyzes the conversion of deoxy-ribose 1-phosphate (dRib-1-P) and ribose 1-phosphate (Rib-1-P) to deoxy-ribose 5-phosphate (dRib-5-P) and ribose 5-phosphate (Rib-5-P), respectively. The chain is Phosphopentomutase from Lactococcus lactis subsp. lactis (strain IL1403) (Streptococcus lactis).